We begin with the raw amino-acid sequence, 493 residues long: MAVLGITIALLVWVATLLVISIWKQIYNSWNLPPGPFPLPILGNIFQLDLKDIPKSFTKLAKRFGPVFTLHLGSRRIVVLHGYKAVKEVLLNHKNEFSGRGDIPVFQEYKNKGIIFNNGPTWKDVRRFSLSILRDWGMGKQGNEARIQREAQFLVEELKKTKGQPFDPTFLIGCAPCNVIADILFNKRFDYNDKKCLRLMSLFNENFYLLSTPWIQLYNNFADYLRYLPGSHRKIMKNVSEIKQYTLEKAKEHLQSLDINCARDVTDCLLIEMEKEKHSQEPMYTMENVSVTLADLFFAGTETTSTTLRYGLLILMKYPEIEEKLHEEIDRVIGPSRVPAVRDRLDMPYMDAVVHEIQRFINLVPSNLPHEATRDTVFQGYVIPKGTVVIPTLDSLLYDSHEFPDPEKFKPEHFLNENGKFKYSDYFKAFSAGKRVCVGEGLARMELFLLLSAILQHFNLKSLVDPKDIDLSPVTVGFGSIPPQFKLCVIPRS.

A substrate-binding site is contributed by 298 to 303; the sequence is FAGTET. Cys-437 contacts heme.

This sequence belongs to the cytochrome P450 family. Interacts with chaperones HSP70 and HSP90; this interaction is required for initial targeting to mitochondria. The cofactor is heme.

The protein localises to the endoplasmic reticulum membrane. The protein resides in the microsome membrane. Its subcellular location is the mitochondrion inner membrane. The enzyme catalyses an organic molecule + reduced [NADPH--hemoprotein reductase] + O2 = an alcohol + oxidized [NADPH--hemoprotein reductase] + H2O + H(+). It catalyses the reaction (5Z,8Z,11Z)-eicosatrienoate + reduced [NADPH--hemoprotein reductase] + O2 = 19-hydroxy-(5Z,8Z,11Z)-eicosatrienoate + oxidized [NADPH--hemoprotein reductase] + H2O + H(+). It carries out the reaction (5Z,8Z,11Z,14Z,17Z)-eicosapentaenoate + reduced [NADPH--hemoprotein reductase] + O2 = 19-hydroxy-(5Z,8Z,11Z,14Z,17Z)-eicosapentaenoate + oxidized [NADPH--hemoprotein reductase] + H2O + H(+). The catalysed reaction is (4Z,7Z,10Z,13Z,16Z,19Z)-docosahexaenoate + reduced [NADPH--hemoprotein reductase] + O2 = 21-hydroxy-(4Z,7Z,10Z,13Z,16Z,19Z)-docosahexaenoate + oxidized [NADPH--hemoprotein reductase] + H2O + H(+). The enzyme catalyses dodecanoate + reduced [NADPH--hemoprotein reductase] + O2 = 11-hydroxydodecanoate + oxidized [NADPH--hemoprotein reductase] + H2O + H(+). It catalyses the reaction tetradecanoate + reduced [NADPH--hemoprotein reductase] + O2 = 13-hydroxytetradecanoate + oxidized [NADPH--hemoprotein reductase] + H2O + H(+). It carries out the reaction 4-nitrophenol + NADPH + O2 + H(+) = 4-nitrocatechol + NADP(+) + H2O. The protein operates within lipid metabolism; fatty acid metabolism. The omega-1 hydroxylase activity is stimulated by cytochrome b5. Functionally, a cytochrome P450 monooxygenase involved in the metabolism of fatty acids. Mechanistically, uses molecular oxygen inserting one oxygen atom into a substrate, and reducing the second into a water molecule, with two electrons provided by NADPH via cytochrome P450 reductase (NADPH--hemoprotein reductase). Catalyzes the hydroxylation of carbon-hydrogen bonds. Hydroxylates fatty acids specifically at the omega-1 position displaying the highest catalytic activity for saturated fatty acids. May be involved in the oxidative metabolism of xenobiotics. This is Cytochrome P450 2E1 from Rattus norvegicus (Rat).